A 248-amino-acid chain; its full sequence is UPF0246 protein RAF_ORF0648 (248 aa).

This sequence belongs to the UPF0246 family.

This is UPF0246 protein RAF_ORF0648 from Rickettsia africae (strain ESF-5).